The primary structure comprises 204 residues: Small ribosomal subunit protein uS4 (204 aa).

In terms of domain architecture, S4 RNA-binding spans 93-156 (SRLSSVLYHS…AKIPVIVEAV (64 aa)).

The protein belongs to the universal ribosomal protein uS4 family. Part of the 30S ribosomal subunit. Contacts protein S5. The interaction surface between S4 and S5 is involved in control of translational fidelity.

One of the primary rRNA binding proteins, it binds directly to 16S rRNA where it nucleates assembly of the body of the 30S subunit. Functionally, with S5 and S12 plays an important role in translational accuracy. In Wolbachia sp. subsp. Brugia malayi (strain TRS), this protein is Small ribosomal subunit protein uS4.